We begin with the raw amino-acid sequence, 355 residues long: Phenylalanine--tRNA ligase alpha subunit (355 aa).

E273 lines the Mg(2+) pocket.

It belongs to the class-II aminoacyl-tRNA synthetase family. Phe-tRNA synthetase alpha subunit type 1 subfamily. In terms of assembly, tetramer of two alpha and two beta subunits. It depends on Mg(2+) as a cofactor.

It localises to the cytoplasm. The enzyme catalyses tRNA(Phe) + L-phenylalanine + ATP = L-phenylalanyl-tRNA(Phe) + AMP + diphosphate + H(+). This chain is Phenylalanine--tRNA ligase alpha subunit, found in Bifidobacterium longum (strain NCC 2705).